The chain runs to 568 residues: Urease subunit alpha (568 aa).

One can recognise a Urease domain in the interval 131–568 (GGIDTHIHFI…LPMAQRYFLF (438 aa)). 3 residues coordinate Ni(2+): His136, His138, and Lys219. An N6-carboxylysine modification is found at Lys219. Residue His221 coordinates substrate. Ni(2+) is bound by residues His248 and His274. The active-site Proton donor is His322. Asp362 is a binding site for Ni(2+).

Belongs to the metallo-dependent hydrolases superfamily. Urease alpha subunit family. Heterotrimer of UreA (gamma), UreB (beta) and UreC (alpha) subunits. Three heterotrimers associate to form the active enzyme. It depends on Ni cation as a cofactor. Post-translationally, carboxylation allows a single lysine to coordinate two nickel ions.

It localises to the cytoplasm. The catalysed reaction is urea + 2 H2O + H(+) = hydrogencarbonate + 2 NH4(+). Its pathway is nitrogen metabolism; urea degradation; CO(2) and NH(3) from urea (urease route): step 1/1. The chain is Urease subunit alpha from Nostoc sp. (strain PCC 7120 / SAG 25.82 / UTEX 2576).